Here is a 943-residue protein sequence, read N- to C-terminus: Translation initiation factor IF-2 (943 aa).

Low complexity predominate over residues 99 to 113 (VKAAQTQAAPVQPEQ). The tract at residues 99–354 (VKAAQTQAAP…LEPNQHAFQA (256 aa)) is disordered. A compositionally biased stretch (basic and acidic residues) spans 117-141 (DAVKARAEAAARAEARAKAEAEAAK). Residues 145-172 (AKAGNKAKPAAQKPTEAKAETAPVAAET) show a composition bias toward low complexity. Over residues 173–197 (KPAEPKEKAVKPKHERNGKGKDAKK) the composition is skewed to basic and acidic residues. Over residues 200 to 215 (KPAAPAVPQPVVSAEE) the composition is skewed to low complexity. Residues 216 to 250 (QAQRDEEARRAAALRAHQEALLKEKQERQARREAM) show a composition bias toward basic and acidic residues. The span at 251–264 (KQQAEQQAKAAQEA) shows a compositional bias: low complexity. Composition is skewed to basic and acidic residues over residues 295–308 (AKKE…DEGQ) and 319–335 (GGRD…ERVR). The tr-type G domain occupies 443 to 612 (PRPPVVTVMG…LLEAEVLELT (170 aa)). Residues 452 to 459 (GHVDHGKT) form a G1 region. Residue 452–459 (GHVDHGKT) participates in GTP binding. A G2 region spans residues 477–481 (GITQH). Residues 498–501 (DTPG) are G3. GTP is bound by residues 498 to 502 (DTPGH) and 552 to 555 (NKID). Residues 552 to 555 (NKID) form a G4 region. Positions 588 to 590 (SAK) are G5.

Belongs to the TRAFAC class translation factor GTPase superfamily. Classic translation factor GTPase family. IF-2 subfamily.

The protein localises to the cytoplasm. One of the essential components for the initiation of protein synthesis. Protects formylmethionyl-tRNA from spontaneous hydrolysis and promotes its binding to the 30S ribosomal subunits. Also involved in the hydrolysis of GTP during the formation of the 70S ribosomal complex. In Neisseria gonorrhoeae (strain NCCP11945), this protein is Translation initiation factor IF-2.